A 179-amino-acid polypeptide reads, in one-letter code: ATP synthase subunit delta 1 (179 aa).

Belongs to the ATPase delta chain family. As to quaternary structure, F-type ATPases have 2 components, F(1) - the catalytic core - and F(0) - the membrane proton channel. F(1) has five subunits: alpha(3), beta(3), gamma(1), delta(1), epsilon(1). F(0) has three main subunits: a(1), b(2) and c(10-14). The alpha and beta chains form an alternating ring which encloses part of the gamma chain. F(1) is attached to F(0) by a central stalk formed by the gamma and epsilon chains, while a peripheral stalk is formed by the delta and b chains.

It localises to the cell inner membrane. Functionally, f(1)F(0) ATP synthase produces ATP from ADP in the presence of a proton or sodium gradient. F-type ATPases consist of two structural domains, F(1) containing the extramembraneous catalytic core and F(0) containing the membrane proton channel, linked together by a central stalk and a peripheral stalk. During catalysis, ATP synthesis in the catalytic domain of F(1) is coupled via a rotary mechanism of the central stalk subunits to proton translocation. Its function is as follows. This protein is part of the stalk that links CF(0) to CF(1). It either transmits conformational changes from CF(0) to CF(1) or is implicated in proton conduction. The protein is ATP synthase subunit delta 1 of Syntrophotalea carbinolica (strain DSM 2380 / NBRC 103641 / GraBd1) (Pelobacter carbinolicus).